Here is a 436-residue protein sequence, read N- to C-terminus: Aminopeptidase C (436 aa).

Residues Cys68, His356, and Asn378 contribute to the active site.

It belongs to the peptidase C1 family. Homohexamer.

The catalysed reaction is Inactivates bleomycin B2 (a cytotoxic glycometallopeptide) by hydrolysis of a carboxyamide bond of beta-aminoalanine, but also shows general aminopeptidase activity. The specificity varies somewhat with source, but amino acid arylamides of Met, Leu and Ala are preferred.. In terms of biological role, hydrolyzes naphthylamide-substituted amino acids as well as di- and tripeptides in which the half-cystine residue is involved in a disulfide loop, notably in oxytocin and vasopressin. Also has a bleomycin hydrolase activity. This is Aminopeptidase C (pepC) from Lactococcus lactis subsp. lactis (strain IL1403) (Streptococcus lactis).